Here is a 517-residue protein sequence, read N- to C-terminus: Intermediate filament family orphan 2 (517 aa).

The region spanning 53–484 (NIHLLKGLNV…RLIKGSADRN (432 aa)) is the IF rod domain. 3 disordered regions span residues 104–129 (EQAV…SSGA), 330–349 (KVAS…RFSD), and 478–517 (KGSA…PMVS). A compositionally biased stretch (low complexity) spans 485–497 (SPSPSSVASSDSG). The span at 501 to 517 (EIQDEFEREADVEPMVS) shows a compositional bias: acidic residues.

This sequence belongs to the intermediate filament family.

The polypeptide is Intermediate filament family orphan 2 (IFFO2) (Homo sapiens (Human)).